The following is a 91-amino-acid chain: UPF0386 protein CC_0226 (91 aa).

Belongs to the UPF0386 family.

The sequence is that of UPF0386 protein CC_0226 from Caulobacter vibrioides (strain ATCC 19089 / CIP 103742 / CB 15) (Caulobacter crescentus).